The following is a 100-amino-acid chain: Urease subunit gamma (100 aa).

The protein belongs to the urease gamma subunit family. As to quaternary structure, heterotrimer of UreA (gamma), UreB (beta) and UreC (alpha) subunits. Three heterotrimers associate to form the active enzyme.

The protein localises to the cytoplasm. The enzyme catalyses urea + 2 H2O + H(+) = hydrogencarbonate + 2 NH4(+). It participates in nitrogen metabolism; urea degradation; CO(2) and NH(3) from urea (urease route): step 1/1. This Jannaschia sp. (strain CCS1) protein is Urease subunit gamma.